The sequence spans 182 residues: ATP-dependent protease subunit HslV (182 aa).

The active site involves Thr6. Positions 164, 167, and 170 each coordinate Na(+).

It belongs to the peptidase T1B family. HslV subfamily. In terms of assembly, a double ring-shaped homohexamer of HslV is capped on each side by a ring-shaped HslU homohexamer. The assembly of the HslU/HslV complex is dependent on binding of ATP.

The protein localises to the cytoplasm. The catalysed reaction is ATP-dependent cleavage of peptide bonds with broad specificity.. Its activity is regulated as follows. Allosterically activated by HslU binding. Functionally, protease subunit of a proteasome-like degradation complex believed to be a general protein degrading machinery. The polypeptide is ATP-dependent protease subunit HslV (Borreliella afzelii (strain PKo) (Borrelia afzelii)).